The following is a 308-amino-acid chain: S-crystallin SL18 (308 aa).

The region spanning 2–80 is the GST N-terminal domain; sequence PKYTLYYFNS…YLARQFGFYG (79 aa). The tract at residues 165–205 is disordered; sequence EMRSQDSMVEPPSQKLSPELESQSSLCSERPQCGPPDPMMG. Over residues 178-191 the composition is skewed to polar residues; sequence QKLSPELESQSSLC. One can recognise a GST C-terminal domain in the interval 185-308; sequence ESQSSLCSER…YFTLRNYTDF (124 aa).

The protein belongs to the GST superfamily. In terms of tissue distribution, lens.

In terms of biological role, S-crystallins are structural components of squids and octopi eye lens. Contains relatively little if any GST activity. This is S-crystallin SL18 from Nototodarus sloanii (Wellington flying squid).